The following is a 178-amino-acid chain: CDP-archaeol synthase (178 aa).

4 consecutive transmembrane segments (helical) span residues 3 to 23 (LLLL…ANAV), 56 to 76 (FFGI…VILY), 91 to 111 (IILS…GSFI), and 136 to 156 (LLFA…LLVI).

Belongs to the CDP-archaeol synthase family. Requires Mg(2+) as cofactor.

It is found in the cell membrane. The enzyme catalyses 2,3-bis-O-(geranylgeranyl)-sn-glycerol 1-phosphate + CTP + H(+) = CDP-2,3-bis-O-(geranylgeranyl)-sn-glycerol + diphosphate. It functions in the pathway membrane lipid metabolism; glycerophospholipid metabolism. In terms of biological role, catalyzes the formation of CDP-2,3-bis-(O-geranylgeranyl)-sn-glycerol (CDP-archaeol) from 2,3-bis-(O-geranylgeranyl)-sn-glycerol 1-phosphate (DGGGP) and CTP. This reaction is the third ether-bond-formation step in the biosynthesis of archaeal membrane lipids. In Methanococcus maripaludis (strain C5 / ATCC BAA-1333), this protein is CDP-archaeol synthase.